A 913-amino-acid chain; its full sequence is WD repeat-containing protein 44 (913 aa).

Residues 1–14 (MASESDTEEFYDAP) are compositionally biased toward acidic residues. The interval 1–24 (MASESDTEEFYDAPEDVHLGGGYP) is disordered. Ala-2 bears the N-acetylalanine mark. Positions 2-170 (ASESDTEEFY…SSTEQLNVLE (169 aa)) are binding activity. Ser-3 is subject to Phosphoserine. An FFAT-like motif motif is present at residues 9-15 (EFYDAPE). Tyr-11 bears the Phosphotyrosine mark. Phosphoserine is present on residues Ser-27, Ser-50, Ser-66, Ser-71, Ser-81, Ser-96, and Ser-126. The stretch at 119–184 (EESQKAESQN…VLNKEAVEVK (66 aa)) forms a coiled coil. Phosphothreonine is present on residues Thr-158 and Thr-219. The interval 205–348 (AVEEVAPAKP…RPRSNSGREL (144 aa)) is disordered. Residues 211–257 (PAKPPRHLTPEPDIVASTKKPVPARPPPPTNFPPPRPPPPSRPAPPP) are important for interaction with ARHGAP26 AND ARHGAP10. Pro residues predominate over residues 233 to 256 (PARPPPPTNFPPPRPPPPSRPAPP). Residue Ser-262 is modified to Phosphoserine. Over residues 262-278 (SELEFETLKTPDIDVPK) the composition is skewed to basic and acidic residues. Position 271 is a phosphothreonine (Thr-271). Positions 280 to 311 (NITSDSLLTASMASESTVKDSQPSLDLASATS) are enriched in polar residues. Residues 334 to 347 (VMGPQRPRSNSGRE) form an important for interaction with RAB11A region. 2 positions are modified to phosphoserine; by PKB/AKT1: Ser-342 and Ser-344. Thr-349 carries the post-translational modification Phosphothreonine. Disordered stretches follow at residues 397 to 424 (SNDA…LKQK) and 459 to 480 (DEVF…MPYT). Phosphoserine occurs at positions 403, 470, 471, and 472. Over residues 467–476 (DDPSSSDDEG) the composition is skewed to acidic residues. Tyr-479 carries the post-translational modification Phosphotyrosine. Residues 509–548 (EHMGAVWTMKFSHCGRLLASAGQDNVVRIWALKNAFDYFN) form a WD 1 repeat. Residues 557–593 (EGRVSPSPSQESLSSSKSDTDTGVCSGTDEDPDDKNA) form a disordered region. Residues Ser-561 and Ser-565 each carry the phosphoserine modification. Residues 561-573 (SPSPSQESLSSSK) show a composition bias toward low complexity. WD repeat units lie at residues 605-643 (GHTA…CLCC), 645-685 (QHID…VALW), 690-729 (GQTK…YHTQ), 740-779 (KVGR…LSMK), 784-823 (VNSS…SKFT), and 876-913 (VLDA…KNVS).

In terms of assembly, interacts with the GTP-bound form of RAB11A and RAB11B. Interacts with GRAF1/ARHGAP26 or GRAF2/ARHGAP10; the interaction connects the endoplasmic reticulum (ER) with the endosomal tubule. Interacts (via FFAT-like motif) with VAPA (via MSP domain) or VAPB (via MSP domain); the interaction connects the ER with the endosomal tubule. Does not bind to RAB7, RAB10, RAB14, RAB35 and RAB8A. Phosphorylated by ATK1; the phosphorylation stabilizes its interaction with RAB11A and RAB11B.

Its subcellular location is the cytoplasm. It is found in the cytosol. The protein resides in the perinuclear region. The protein localises to the endosome membrane. It localises to the golgi apparatus. Its subcellular location is the trans-Golgi network. Its function is as follows. Downstream effector for Rab11 which regulates Rab11 intracellular membrane trafficking functions such as endocytic recycling, intracellular ciliogenesis and protein export. ATK1-mediated phosphorylation of WDR44 induces binding to Rab11 which activates endocytic recycling of transferrin receptor back to the plasma membrane. When bound to Rab11, prevents the formation of the ciliogenic Rab11-Rabin8/RAB3IP-RAB11FIP3 complex, therefore inhibiting preciliary trafficking and ciliogenesis. Participates in neo-synthesized protein export by connecting the endoplasmic reticulum (ER) with the endosomal tubule via direct interactions with the integral ER proteins VAPA or VAPB and the endosomal protein GRAFs (GRAF1/ARHGAP26 or GRAF2/ARHGAP10), which facilitates the transfer of proteins such as E-cadherin, MPP14 and CFTR into a Rab8-Rab10-Rab11-dependent export route. The chain is WD repeat-containing protein 44 from Homo sapiens (Human).